We begin with the raw amino-acid sequence, 465 residues long: Glutamate--tRNA ligase (465 aa).

The short motif at 11–21 is the 'HIGH' region element; sequence PSPTGFIHLGN. Residues 118-139 are disordered; the sequence is GEKPRYDGTWRPAPGKILPPPP. The 'KMSKS' region signature appears at 243–247; sequence KMSKR. Lysine 246 lines the ATP pocket.

The protein belongs to the class-I aminoacyl-tRNA synthetase family. Glutamate--tRNA ligase type 1 subfamily. In terms of assembly, monomer.

It is found in the cytoplasm. It catalyses the reaction tRNA(Glu) + L-glutamate + ATP = L-glutamyl-tRNA(Glu) + AMP + diphosphate. Functionally, catalyzes the attachment of glutamate to tRNA(Glu) in a two-step reaction: glutamate is first activated by ATP to form Glu-AMP and then transferred to the acceptor end of tRNA(Glu). The chain is Glutamate--tRNA ligase from Ralstonia pickettii (strain 12J).